Here is a 111-residue protein sequence, read N- to C-terminus: Ig kappa chain V region 3368 (111 aa).

The tract at residues 1 to 24 is framework-1; the sequence is ADIVMTQTPSSVSAAVGGTVTIKC. Positions 25-35 are complementarity-determining-1; sequence QASESIGNELA. The segment at 36–50 is framework-2; it reads WYQQKPGQPPKLLIY. The complementarity-determining-2 stretch occupies residues 51 to 57; it reads RASKLAS. Residues 58–89 form a framework-3 region; that stretch reads GVSSRFKGSGSGTEFTLTISGVQCDDAGIYYC. The tract at residues 90–101 is complementarity-determining-3; sequence QQDWNSNNVVNN. The segment at 102–111 is framework-4; the sequence is FGGGTEVVVK.

This Oryctolagus cuniculus (Rabbit) protein is Ig kappa chain V region 3368.